Reading from the N-terminus, the 724-residue chain is NAD(+) hydrolase SARM1 (724 aa).

Residues 1–27 (MVLTLLFSAYKLCRFFTMSGPRPGADR) constitute a mitochondrion transit peptide. The tract at residues 24-56 (GADRLTVPGPDRSGGASPWWAAGGRGSREVSPG) is disordered. Low complexity predominate over residues 36–45 (SGGASPWWAA). Residues 60 to 100 (EVQGALERSLPELQQALSELKQASAARAVGAGLAEVFQLVE) form an ARM 1 repeat. NAD(+)-binding positions include W103, R110, 149–157 (EQILVAENR), and 190–193 (HMFK). 7 ARM repeats span residues 114–153 (QGLC…QILV), 155–193 (ENRD…HMFK), 196–235 (EETC…NCAL), 237–280 (GGQT…LATN), 281–314 (KEVE…CLVD), 315–354 (ASDT…AEAA), and 359–402 (QGKT…EEVP). SAM domains are found at residues 412 to 476 (WKEA…LKTF) and 486 to 548 (NLAD…MLHS). Residues S548 and S558 each carry the phosphoserine modification. The 144-residue stretch at 560-703 (DTPDVFISYR…KIIRFLQGRP (144 aa)) folds into the TIR domain. Residues 569 to 570 (RR) and E599 contribute to the NAD(+) site. Residue E642 is part of the active site. Polar residues predominate over residues 703–716 (PSQDSSAGSDTSLE). Residues 703-724 (PSQDSSAGSDTSLEGATPMGLP) form a disordered region.

It belongs to the SARM1 family. In terms of assembly, homooctamer; forms an octameric ring via SAM domains. Interacts with TICAM1/TRIF and thereby interferes with TICAM1/TRIF function. Interacts with SDC2 (via cytoplasmic domain) and MAPK10/JNK3. Post-translationally, phosphorylation at Ser-548 by JNK kinases (MAPK8, MAPK9 and /or MAPK10) enhance the NAD(+) hydrolase (NADase) activity. Phosphorylation at Ser-548 and subsequent activation takes place in response to oxidative stress conditions and inhibits mitochondrial respiration. As to expression, widely expressed in the brain and neurons (at protein level). Expressed in photoreceptor cells of the neural retina.

The protein resides in the cytoplasm. It localises to the cell projection. Its subcellular location is the axon. The protein localises to the dendrite. It is found in the synapse. The protein resides in the mitochondrion. The enzyme catalyses NAD(+) + H2O = ADP-D-ribose + nicotinamide + H(+). The catalysed reaction is NAD(+) = cyclic ADP-beta-D-ribose + nicotinamide + H(+). It catalyses the reaction NADP(+) + H2O = ADP-D-ribose 2'-phosphate + nicotinamide + H(+). Autoinhibited: in the inactive state, the enzymatic TIR domain is held apart by the autoinhibiting ARM repeats. NAD(+)-binding to ARM repeats maintains an inactive state by promoting interaction between ARM repeats and the TIR domain, thereby facilitating inhibition of the enzymatic TIR domain. Following activation, possibly by nicotinamide mononucleotide (NMN), auto-inhibitory interactions are released, allowing self-association of the TIR domains and subsequent activation of the NAD(+) hydrolase (NADase) activity. Self-association of TIR domains is facilitated by the octamer of SAM domains. In terms of biological role, NAD(+) hydrolase, which plays a key role in axonal degeneration following injury by regulating NAD(+) metabolism. Acts as a negative regulator of MYD88- and TRIF-dependent toll-like receptor signaling pathway by promoting Wallerian degeneration, an injury-induced form of programmed subcellular death which involves degeneration of an axon distal to the injury site. Wallerian degeneration is triggered by NAD(+) depletion: in response to injury, SARM1 is activated and catalyzes cleavage of NAD(+) into ADP-D-ribose (ADPR), cyclic ADPR (cADPR) and nicotinamide; NAD(+) cleavage promoting cytoskeletal degradation and axon destruction. Also able to hydrolyze NADP(+), but not other NAD(+)-related molecules. Can activate neuronal cell death in response to stress. Regulates dendritic arborization through the MAPK4-JNK pathway. Involved in innate immune response: inhibits both TICAM1/TRIF- and MYD88-dependent activation of JUN/AP-1, TRIF-dependent activation of NF-kappa-B and IRF3, and the phosphorylation of MAPK14/p38. The polypeptide is NAD(+) hydrolase SARM1 (Mus musculus (Mouse)).